Reading from the N-terminus, the 156-residue chain is Small ribosomal subunit protein uS7 (156 aa).

The protein belongs to the universal ribosomal protein uS7 family. As to quaternary structure, part of the 30S ribosomal subunit. Contacts proteins S9 and S11.

In terms of biological role, one of the primary rRNA binding proteins, it binds directly to 16S rRNA where it nucleates assembly of the head domain of the 30S subunit. Is located at the subunit interface close to the decoding center, probably blocks exit of the E-site tRNA. The chain is Small ribosomal subunit protein uS7 from Burkholderia ambifaria (strain MC40-6).